The chain runs to 286 residues: uncharacterized protein (286 aa).

A Radical SAM core domain is found at 36–256 (ENPQHHPSIE…IKGCLLVQLK (221 aa)). Cysteine 50, cysteine 54, and cysteine 57 together coordinate [4Fe-4S] cluster.

Requires [4Fe-4S] cluster as cofactor.

This is an uncharacterized protein from Methanocaldococcus jannaschii (strain ATCC 43067 / DSM 2661 / JAL-1 / JCM 10045 / NBRC 100440) (Methanococcus jannaschii).